A 172-amino-acid polypeptide reads, in one-letter code: Centrin-2 (172 aa).

Polar residues predominate over residues 1–14; it reads MASNFKKTTMASSA. Positions 1 to 31 are disordered; that stretch reads MASNFKKTTMASSAQRKRMSPKPELTEDQKQ. At A2 the chain carries N-acetylalanine. The interval 2–25 is required for self-assembly; the sequence is ASNFKKTTMASSAQRKRMSPKPEL. S20 bears the Phosphoserine mark. K22 is covalently cross-linked (Glycyl lysine isopeptide (Lys-Gly) (interchain with G-Cter in SUMO2)). Position 26 is a phosphothreonine (T26). EF-hand domains follow at residues 28 to 63, 64 to 99, 101 to 136, and 137 to 172; these read DQKQEIREAFDLFDADGTGTIDIKELKVAMRALGFE, PKKEEIKKMISEIDKEGTGKMNFSDFLTVMTQKMSE, DTKEEILKAFKLFDDDETGKISFKNLKRVAKELGEN, and LTDEELQEMIDEADRDGDGEVNEQEFLRIMKKTSLY. Ca(2+) contacts are provided by D41, D43, T45, T47, and E52. 5 residues coordinate Ca(2+): D150, D152, D154, E156, and E161.

It belongs to the centrin family. Monomer. Homooligomer. Interacts with CCP110, SFI1. Component of the XPC complex composed of XPC, RAD23B and CETN2. Component of the nuclear pore complex (NPC)-associated TREX-2 complex (transcription and export complex 2), composed of at least GANP, 2 copies of ENY2, PCID2, SEM1/DSS1, and either centrin CETN2 or centrin CETN3. The TREX-2 complex also associates with ALYREF/ALY and with the nucleoporin NUP153. Interacts with USP49. Forms a microtubule-associated complex with POC5, POC1B and FAM161A. Interacts with CCDC15. Ubiquitously expressed in all adult tissues tested, with strongest expression in brain, spleen, kidney, small intestine and ovary. Also expressed in the NIH 3T3 fibroblast cell line and peripheral blood lymphocytes.

The protein resides in the cytoplasm. Its subcellular location is the cytoskeleton. The protein localises to the microtubule organizing center. It localises to the centrosome. It is found in the centriole. The protein resides in the nucleus. Its subcellular location is the nucleus envelope. The protein localises to the nuclear pore complex. Plays a fundamental role in microtubule organizing center structure and function. Required for centriole duplication and correct spindle formation. Has a role in regulating cytokinesis and genome stability via cooperation with CALM1 and CCP110. Functionally, involved in global genome nucleotide excision repair (GG-NER) by acting as component of the XPC complex. Cooperatively with Rad23b appears to stabilize Xpc. In vitro, stimulates DNA binding of the Xpc:Rad23b dimer. Its function is as follows. The XPC complex is proposed to represent the first factor bound at the sites of DNA damage and together with other core recognition factors, Xpa, RPA and the TFIIH complex, is part of the pre-incision (or initial recognition) complex. The XPC complex recognizes a wide spectrum of damaged DNA characterized by distortions of the DNA helix such as single-stranded loops, mismatched bubbles or single-stranded overhangs. The orientation of XPC complex binding appears to be crucial for inducing a productive NER. XPC complex is proposed to recognize and to interact with unpaired bases on the undamaged DNA strand which is followed by recruitment of the TFIIH complex and subsequent scanning for lesions in the opposite strand in a 5'-to-3' direction by the NER machinery. Cyclobutane pyrimidine dimers (CPDs) which are formed upon UV-induced DNA damage esacpe detection by the XPC complex due to a low degree of structural perurbation. Instead they are detected by the UV-DDB complex which in turn recruits and cooperates with the XPC complex in the respective DNA repair. In terms of biological role, as a component of the TREX-2 complex, involved in the export of mRNAs to the cytoplasm through the nuclear pores. The polypeptide is Centrin-2 (Cetn2) (Mus musculus (Mouse)).